The following is a 342-amino-acid chain: uncharacterized protein (342 aa).

This is an uncharacterized protein from Magallana gigas (Pacific oyster).